An 83-amino-acid polypeptide reads, in one-letter code: Small ribosomal subunit protein eS21 (83 aa).

Belongs to the eukaryotic ribosomal protein eS21 family. In terms of assembly, component of the 40S small ribosomal subunit. Interacts with sta.

The protein localises to the cytoplasm. The protein resides in the cytosol. It localises to the rough endoplasmic reticulum. Its function is as follows. May be an associated component of the ribosome rather than a core structural subunit. May act as a translation initiation factor. Has a role in regulation of cell proliferation in the hematopoietic organs and the imaginal disks of larva. In Drosophila erecta (Fruit fly), this protein is Small ribosomal subunit protein eS21 (RpS21).